The sequence spans 150 residues: UPF0178 protein ECA0873 (150 aa).

It belongs to the UPF0178 family.

The polypeptide is UPF0178 protein ECA0873 (Pectobacterium atrosepticum (strain SCRI 1043 / ATCC BAA-672) (Erwinia carotovora subsp. atroseptica)).